Consider the following 135-residue polypeptide: Small ribosomal subunit protein uS11 (135 aa).

The segment at 1-20 (MGRQRQQRSRGSRSRRRVRK) is disordered.

Belongs to the universal ribosomal protein uS11 family. As to quaternary structure, part of the 30S ribosomal subunit. Interacts with proteins S7 and S18. Binds to IF-3.

In terms of biological role, located on the platform of the 30S subunit, it bridges several disparate RNA helices of the 16S rRNA. Forms part of the Shine-Dalgarno cleft in the 70S ribosome. In Rubrobacter xylanophilus (strain DSM 9941 / JCM 11954 / NBRC 16129 / PRD-1), this protein is Small ribosomal subunit protein uS11.